Here is a 670-residue protein sequence, read N- to C-terminus: MALCGVCSTPNLPNLQVFRSVRNSSIGYKRNHSLWQLRSSSFRAKSVIFHCSSSLRQSPSNVEEIDDNPSVSLEDESAHVMQFKWSDFRILDRVSIGHGGRADELVFEAIVQVPDSPLFNQGVVLRKLNTTRAQRRGRRAIEVFKKLVRRRLLYHSYSMQVHGYITNNLSDDQYSFTLVHGCHGSFSIRHWLQQSDWIPTLEATLALDEESFRRVGDDTTGGPAVSRQLRLIRTLMRDILIGVNYLHSHGLAHTELRLENVHISPVDRHIKVGILGNAADFNGDVPSTSNAYSTMDRRQMMIAFDMRCVGFMMAKMVLQELMDPLIFAKLKSFLAKGNDPSSLREFFVTTLNTNSESGNTGVQILDRNWGAGWHLLSLLIATRPSERISCLDALKHPFLCGPRWRVAPSMDIIRWGLGSTAVKISEEYIYRMPQRQRLAHFIGLMEMLNPYPKPNCWLELLPGRWRLLYSTGKHIGLTLRQPSTRALIGNVHLTITRASESINNTSLSFTSDIRFTAITSKDWPHNKIGAAGKLQTLSQFRLIAGKRLYLKEEKKNIGKFSMGEPDAEEGLAEKLETEKWKKVVPFKEFPSSLPVAKLVSGEIEVTMNMNDHIDSPGSVIGEVRKQIPPEMFDLSKLVCGTYIDSRLLVLRCVNGSALLFTRSSLDHKSM.

Residues 1–52 (MALCGVCSTPNLPNLQVFRSVRNSSIGYKRNHSLWQLRSSSFRAKSVIFHCS) constitute a chloroplast transit peptide. The Protein kinase domain occupies 88–399 (FRILDRVSIG…CLDALKHPFL (312 aa)).

Belongs to the PAP/fibrillin family. In terms of processing, not autophosphorylated. Expressed in roots.

Its subcellular location is the plastid. The protein localises to the chloroplast. Its function is as follows. Directly regulated by DOF3.6/OBP3; unknown function. This chain is Probable plastid-lipid-associated protein 14, chloroplastic (PAP14), found in Arabidopsis thaliana (Mouse-ear cress).